We begin with the raw amino-acid sequence, 405 residues long: Tyrosine--tRNA ligase (405 aa).

The 'HIGH' region motif lies at Pro48 to His57. The 'KMSKS' region motif lies at Lys232–Ser236. Position 235 (Lys235) interacts with ATP. In terms of domain architecture, S4 RNA-binding spans Leu339 to Ala400.

This sequence belongs to the class-I aminoacyl-tRNA synthetase family. TyrS type 2 subfamily. Homodimer.

It localises to the cytoplasm. The catalysed reaction is tRNA(Tyr) + L-tyrosine + ATP = L-tyrosyl-tRNA(Tyr) + AMP + diphosphate + H(+). Catalyzes the attachment of tyrosine to tRNA(Tyr) in a two-step reaction: tyrosine is first activated by ATP to form Tyr-AMP and then transferred to the acceptor end of tRNA(Tyr). This Chlorobium luteolum (strain DSM 273 / BCRC 81028 / 2530) (Pelodictyon luteolum) protein is Tyrosine--tRNA ligase.